The sequence spans 326 residues: Metal-binding protein YtgA (326 aa).

The signal sequence occupies residues 1–21 (MFFLHVRKYKHVIGGLLCLAG). Fe(2+)-binding residues include His-75, His-141, His-207, and Asp-299.

The protein belongs to the bacterial solute-binding protein 9 family. In terms of assembly, monomer.

It localises to the periplasm. In terms of biological role, part of the ATP-binding cassette (ABC) transport system YtgABCD involved in metal import. Binds Fe(2+), Mn(2+) and Ni(2+), with a preference for Fe(2+) and delivers them to the membrane permease for translocation into the cytoplasm. This chain is Metal-binding protein YtgA, found in Chlamydia muridarum (strain MoPn / Nigg).